A 167-amino-acid chain; its full sequence is NADH-ubiquinone oxidoreductase chain 6 (167 aa).

Helical transmembrane passes span 24 to 44 (PYFG…IILA), 54 to 74 (LLLI…ALVL), 85 to 105 (VLMK…GGYL), and 135 to 155 (WLLI…ILEI).

It belongs to the complex I subunit 6 family.

It localises to the mitochondrion membrane. The catalysed reaction is a ubiquinone + NADH + 5 H(+)(in) = a ubiquinol + NAD(+) + 4 H(+)(out). Its function is as follows. Core subunit of the mitochondrial membrane respiratory chain NADH dehydrogenase (Complex I) that is believed to belong to the minimal assembly required for catalysis. Complex I functions in the transfer of electrons from NADH to the respiratory chain. The immediate electron acceptor for the enzyme is believed to be ubiquinone. The polypeptide is NADH-ubiquinone oxidoreductase chain 6 (MT-ND6) (Myxine glutinosa (Atlantic hagfish)).